Consider the following 215-residue polypeptide: Cytochrome b6 (215 aa).

The chain crosses the membrane as a helical span at residues 32–52 (IFYCLGGITLTCFLVQVATGF). Residue cysteine 35 participates in heme c binding. Heme b is bound by residues histidine 86 and histidine 100. The next 3 membrane-spanning stretches (helical) occupy residues 90-110 (ASMMVLMMILHVFRVYLTGGF), 116-136 (LTWVTGVVLAVLTASFGVTGY), and 186-206 (LHTFVLPLLTAVFMLMHFLMI). The heme b site is built by histidine 187 and histidine 202.

This sequence belongs to the cytochrome b family. PetB subfamily. In terms of assembly, the 4 large subunits of the cytochrome b6-f complex are cytochrome b6, subunit IV (17 kDa polypeptide, PetD), cytochrome f and the Rieske protein, while the 4 small subunits are PetG, PetL, PetM and PetN. The complex functions as a dimer. It depends on heme b as a cofactor. The cofactor is heme c.

The protein localises to the plastid. It is found in the chloroplast thylakoid membrane. Its function is as follows. Component of the cytochrome b6-f complex, which mediates electron transfer between photosystem II (PSII) and photosystem I (PSI), cyclic electron flow around PSI, and state transitions. The sequence is that of Cytochrome b6 from Hordeum vulgare (Barley).